Consider the following 60-residue polypeptide: UPF0434 protein YcaR (60 aa).

The protein belongs to the UPF0434 family.

The protein is UPF0434 protein YcaR of Salmonella arizonae (strain ATCC BAA-731 / CDC346-86 / RSK2980).